Reading from the N-terminus, the 229-residue chain is Uracil-DNA glycosylase (229 aa).

The Proton acceptor role is filled by aspartate 64.

Belongs to the uracil-DNA glycosylase (UDG) superfamily. UNG family.

Its subcellular location is the cytoplasm. It carries out the reaction Hydrolyzes single-stranded DNA or mismatched double-stranded DNA and polynucleotides, releasing free uracil.. Excises uracil residues from the DNA which can arise as a result of misincorporation of dUMP residues by DNA polymerase or due to deamination of cytosine. This Salmonella choleraesuis (strain SC-B67) protein is Uracil-DNA glycosylase.